The following is an 807-amino-acid chain: Glycerol-3-phosphate acyltransferase (807 aa).

The HXXXXD motif signature appears at 308–313; that stretch reads CHRSHM.

This sequence belongs to the GPAT/DAPAT family.

Its subcellular location is the cell inner membrane. The catalysed reaction is sn-glycerol 3-phosphate + an acyl-CoA = a 1-acyl-sn-glycero-3-phosphate + CoA. It participates in phospholipid metabolism; CDP-diacylglycerol biosynthesis; CDP-diacylglycerol from sn-glycerol 3-phosphate: step 1/3. The protein is Glycerol-3-phosphate acyltransferase of Shewanella baltica (strain OS195).